The sequence spans 476 residues: Glutamyl-tRNA(Gln) amidotransferase subunit A (476 aa).

Catalysis depends on charge relay system residues lysine 77 and serine 152. Serine 176 functions as the Acyl-ester intermediate in the catalytic mechanism.

This sequence belongs to the amidase family. GatA subfamily. In terms of assembly, heterotrimer of A, B and C subunits.

The enzyme catalyses L-glutamyl-tRNA(Gln) + L-glutamine + ATP + H2O = L-glutaminyl-tRNA(Gln) + L-glutamate + ADP + phosphate + H(+). Its function is as follows. Allows the formation of correctly charged Gln-tRNA(Gln) through the transamidation of misacylated Glu-tRNA(Gln) in organisms which lack glutaminyl-tRNA synthetase. The reaction takes place in the presence of glutamine and ATP through an activated gamma-phospho-Glu-tRNA(Gln). The polypeptide is Glutamyl-tRNA(Gln) amidotransferase subunit A (Acidobacterium capsulatum (strain ATCC 51196 / DSM 11244 / BCRC 80197 / JCM 7670 / NBRC 15755 / NCIMB 13165 / 161)).